The chain runs to 137 residues: Large ribosomal subunit protein uL16 (137 aa).

Positions 1-17 (MLQPKRTKFRKTHKGRN) are enriched in basic residues. Positions 1–23 (MLQPKRTKFRKTHKGRNRGLAQN) are disordered.

The protein belongs to the universal ribosomal protein uL16 family. Part of the 50S ribosomal subunit.

Binds 23S rRNA and is also seen to make contacts with the A and possibly P site tRNAs. This is Large ribosomal subunit protein uL16 from Pseudoalteromonas translucida (strain TAC 125).